The sequence spans 101 residues: Urease subunit beta (101 aa).

This sequence belongs to the urease beta subunit family. In terms of assembly, heterotrimer of UreA (gamma), UreB (beta) and UreC (alpha) subunits. Three heterotrimers associate to form the active enzyme.

The protein localises to the cytoplasm. The enzyme catalyses urea + 2 H2O + H(+) = hydrogencarbonate + 2 NH4(+). It functions in the pathway nitrogen metabolism; urea degradation; CO(2) and NH(3) from urea (urease route): step 1/1. The chain is Urease subunit beta from Allorhizobium ampelinum (strain ATCC BAA-846 / DSM 112012 / S4) (Agrobacterium vitis (strain S4)).